The primary structure comprises 180 residues: Cytokinin-beta-glucosidase 2 (180 aa).

In terms of biological role, hydrolyzes cytokinin glucosides thus liberating free cytokinins. The protein is Cytokinin-beta-glucosidase 2 (ROLC2) of Linaria vulgaris (Toadflax).